Here is a 161-residue protein sequence, read N- to C-terminus: Regulatory protein RecX (161 aa).

The protein belongs to the RecX family.

It localises to the cytoplasm. Functionally, modulates RecA activity. In Halorhodospira halophila (strain DSM 244 / SL1) (Ectothiorhodospira halophila (strain DSM 244 / SL1)), this protein is Regulatory protein RecX.